The chain runs to 275 residues: Peflin (275 aa).

8 consecutive repeat copies span residues 21 to 29 (PPGGYYPGP), 31 to 39 (HGGGQYGSG), 41 to 49 (PPGGGYGAP), 50 to 59 (APGGPYGYPS), 60 to 68 (AGGVPSGTP), 76 to 84 (PPGGPYGQL), 85 to 91 (PPGGPYG), and 92 to 100 (TQPGHYGQG). Disordered regions lie at residues 21–45 (PPGG…PGGG) and 59–103 (SAGG…GGVP). The segment at 21–100 (PPGGYYPGPP…GTQPGHYGQG (80 aa)) is 8 X 9 AA approximate tandem repeat of [AP]-P-G-G-P-Y-G-G-P-P. Residues 31-45 (HGGGQYGSGLPPGGG) are compositionally biased toward gly residues. Positions 59–70 (SAGGVPSGTPSG) are enriched in low complexity. EF-hand domains are found at residues 105–140 (NVDP…SNWS), 146–174 (TCLM…WKFL), 172–207 (KFLQ…MGYN), 208–244 (LSPQ…LQVL), and 245–274 (TEAF…ASRM). Asp-118, Asp-120, Ser-122, Tyr-124, and Glu-129 together coordinate Ca(2+). 5 residues coordinate Ca(2+): Asp-185, Asp-187, Ser-189, Ser-191, and Glu-196. A required for interaction with PDCD6 region spans residues 195–275 (TELQQALSQM…FVTMTASRML (81 aa)).

As to quaternary structure, heterodimer; heterodimerizes (via the EF-hand 5) with PDCD6. Dissociates from PDCD6 in presence of calcium. In terms of processing, ubiquitinated by the BCR(KLHL12) E3 ubiquitin ligase complex.

It is found in the cytoplasm. The protein resides in the endoplasmic reticulum. It localises to the membrane. The protein localises to the cytoplasmic vesicle. Its subcellular location is the COPII-coated vesicle membrane. Its function is as follows. Calcium-binding protein that acts as an adapter that bridges unrelated proteins or stabilizes weak protein-protein complexes in response to calcium. Together with PDCD6, acts as a calcium-dependent adapter for the BCR(KLHL12) complex, a complex involved in endoplasmic reticulum (ER)-Golgi transport by regulating the size of COPII coats. In response to cytosolic calcium increase, the heterodimer formed with PDCD6 interacts with, and bridges together the BCR(KLHL12) complex and SEC31 (SEC31A or SEC31B), promoting monoubiquitination of SEC31 and subsequent collagen export, which is required for neural crest specification. Its role in the heterodimer formed with PDCD6 is however unclear: some evidence shows that PEF1 and PDCD6 work together and promote association between PDCD6 and SEC31 in presence of calcium. Other reports show that PEF1 dissociates from PDCD6 in presence of calcium, and may act as a negative regulator of PDCD6. Also acts as a negative regulator of ER-Golgi transport; possibly by inhibiting interaction between PDCD6 and SEC31. The sequence is that of Peflin from Mus musculus (Mouse).